Here is a 336-residue protein sequence, read N- to C-terminus: MKRIAVLTSGGDAPGMNAAIRAVVRQAISEGMEVYGINEGYAGMVAGDIHELSARSVGDIISRGGTFLCSARYPEFAKLEGQLKGIEQLKKHGIEGVVVIGGDGSYHGAMRLTEHGFPAIGVPGTIDNDIVGTDFTIGFDTAVTTAMDAIDKIRDTSSSHRRTFVVEVMGRHAGDIALWAGIASGADVIVVPEEDFNINDVVDRIKAGYDKGKKHSIIVLAEGVMPAAQFAEELKAAGDTSDLRVTELGHIQRGGSPTARDRVLASRMGAHAVKLLKEGRGGLAVGIRNEQMVENPILGTAEEGALFSLTTDGKIVVNNPHKADLELADLNRNLSI.

An ATP-binding site is contributed by G11. An ADP-binding site is contributed by 21–25 (RAVVR). ATP is bound by residues 72–73 (RY) and 102–105 (GDGS). Residue D103 coordinates Mg(2+). 125 to 127 (TID) serves as a coordination point for substrate. The active-site Proton acceptor is the D127. ADP is bound at residue R154. Substrate is bound by residues R162 and 169 to 171 (MGR). Residues 185–187 (GAD), K211, and 213–215 (KKH) contribute to the ADP site. Substrate contacts are provided by residues E222, R244, and 250–253 (HIQR).

The protein belongs to the phosphofructokinase type A (PFKA) family. ATP-dependent PFK group I subfamily. Prokaryotic clade 'B1' sub-subfamily. As to quaternary structure, homotetramer. Mg(2+) is required as a cofactor.

Its subcellular location is the cytoplasm. The catalysed reaction is beta-D-fructose 6-phosphate + ATP = beta-D-fructose 1,6-bisphosphate + ADP + H(+). It functions in the pathway carbohydrate degradation; glycolysis; D-glyceraldehyde 3-phosphate and glycerone phosphate from D-glucose: step 3/4. Allosterically activated by ADP and other diphosphonucleosides, and allosterically inhibited by phosphoenolpyruvate. Catalyzes the phosphorylation of D-fructose 6-phosphate to fructose 1,6-bisphosphate by ATP, the first committing step of glycolysis. This chain is ATP-dependent 6-phosphofructokinase, found in Streptococcus suis (strain 05ZYH33).